Here is a 238-residue protein sequence, read N- to C-terminus: N-methyltransferase vrtF (238 aa).

The protein belongs to the methyltransferase superfamily.

Its pathway is secondary metabolite biosynthesis; terpenoid biosynthesis. N-methyltransferase; part of the gene cluster that mediates the biosynthesis of viridicatumtoxin, a tetracycline-like fungal meroterpenoid with a unique, fused spirobicyclic ring system. The first step of the pathway is the production of the malonamoyl-CoA starter unit for the polyketide synthase vrtA. The aldolase vrtJ may be involved in the synthesis of the malonamate substrate for malonamoyl-CoA synthetase vrtB. The polyketide synthase vrtA then may utilize the malonamoyl-CoA starter unit, followed by sequential condensation of eight malonyl-CoA units to form the polyketide backbone. The cyclization of the last ring could be mediated by the lactamase-like protein vrtG. The proposed post-PKS tailoring steps are a hydroxylation at C5 catalyzed the cytochrome P450 monooxygenase vrtE, a hydroxylation at C12a catalyzed by VrtH and/or VrtI, and an O-methylation by the O-methyltransferase vrtF. VrtC is then proposed to catalyze the transfer of a geranyl group synthesized by vrtD to the aromatic C ring of the tetracyclic polyketide intermediate of viridicatumtoxin to yield previridicatumtoxin. Finally, the cytochrome P450 monooxygenase vrtK catalyzes the spirocyclization of the geranyl moiety of previridicatumtoxin to afford viridicatumtoxin. This chain is N-methyltransferase vrtF, found in Penicillium aethiopicum.